Here is a 342-residue protein sequence, read N- to C-terminus: Selenide, water dikinase (342 aa).

C13 is an active-site residue. Residues K16 and 44 to 46 (SCD) each bind ATP. Mg(2+) is bound at residue D47. ATP is bound by residues D64, D87, and 134 to 136 (GHS). A Mg(2+)-binding site is contributed by D87. Residue D222 participates in Mg(2+) binding.

It belongs to the selenophosphate synthase 1 family. Class I subfamily. In terms of assembly, homodimer. The cofactor is Mg(2+).

The catalysed reaction is hydrogenselenide + ATP + H2O = selenophosphate + AMP + phosphate + 2 H(+). In terms of biological role, synthesizes selenophosphate from selenide and ATP. This Agathobacter rectalis (strain ATCC 33656 / DSM 3377 / JCM 17463 / KCTC 5835 / VPI 0990) (Eubacterium rectale) protein is Selenide, water dikinase.